The sequence spans 429 residues: Glutamate-1-semialdehyde 2,1-aminomutase (429 aa).

Lys-265 is modified (N6-(pyridoxal phosphate)lysine).

It belongs to the class-III pyridoxal-phosphate-dependent aminotransferase family. HemL subfamily. In terms of assembly, homodimer. Pyridoxal 5'-phosphate serves as cofactor.

It is found in the cytoplasm. The enzyme catalyses (S)-4-amino-5-oxopentanoate = 5-aminolevulinate. It participates in porphyrin-containing compound metabolism; protoporphyrin-IX biosynthesis; 5-aminolevulinate from L-glutamyl-tRNA(Glu): step 2/2. This Shewanella halifaxensis (strain HAW-EB4) protein is Glutamate-1-semialdehyde 2,1-aminomutase.